The following is a 327-amino-acid chain: (-)-delta-cadinene synthase (327 aa).

Mg(2+) contacts are provided by D84, D85, N222, T226, and E230.

This sequence belongs to the terpene synthase family.

The catalysed reaction is (2E,6E)-farnesyl diphosphate = (-)-delta-cadinene + diphosphate. Functionally, catalyzes the conversion of (2E,6E)-farnesyl diphosphate into (-)-delta-cadinene. Cyclization mechanism involves an intermediate nerolidyl diphosphate leading to a helminthogermacradienyl cation. This Streptomyces clavuligerus protein is (-)-delta-cadinene synthase.